The chain runs to 332 residues: Biotin synthase (332 aa).

In terms of domain architecture, Radical SAM core spans Y51–R279. [4Fe-4S] cluster contacts are provided by C66, C70, and C73. [2Fe-2S] cluster is bound by residues C110, C142, C202, and R274.

It belongs to the radical SAM superfamily. Biotin synthase family. As to quaternary structure, homodimer. Requires [4Fe-4S] cluster as cofactor. The cofactor is [2Fe-2S] cluster.

The enzyme catalyses (4R,5S)-dethiobiotin + (sulfur carrier)-SH + 2 reduced [2Fe-2S]-[ferredoxin] + 2 S-adenosyl-L-methionine = (sulfur carrier)-H + biotin + 2 5'-deoxyadenosine + 2 L-methionine + 2 oxidized [2Fe-2S]-[ferredoxin]. Its pathway is cofactor biosynthesis; biotin biosynthesis; biotin from 7,8-diaminononanoate: step 2/2. Its function is as follows. Catalyzes the conversion of dethiobiotin (DTB) to biotin by the insertion of a sulfur atom into dethiobiotin via a radical-based mechanism. The sequence is that of Biotin synthase from Prochlorococcus marinus (strain SARG / CCMP1375 / SS120).